A 230-amino-acid chain; its full sequence is Cell division ATP-binding protein FtsE (230 aa).

The region spanning 4–229 (IEMRDVVKKY…DESKGEYGYD (226 aa)) is the ABC transporter domain. 37–44 (GPSGAGKS) contributes to the ATP binding site.

Belongs to the ABC transporter superfamily. In terms of assembly, homodimer. Interacts with FtsX; forms a membrane-associated complex. Interacts with pcsB.

Its subcellular location is the cell membrane. The catalysed reaction is ATP + H2O = ADP + phosphate + H(+). In terms of biological role, part of the ABC transporter FtsEX involved in cellular division. Has ATPase activity. Essential for cell division and viability. This is Cell division ATP-binding protein FtsE from Streptococcus pneumoniae serotype 2 (strain D39 / NCTC 7466).